The chain runs to 335 residues: Nuclear transcription factor Y subunit gamma (335 aa).

Belongs to the NFYC/HAP5 subunit family. As to quaternary structure, heterotrimeric transcription factor composed of three components, NF-YA, NF-YB and NF-YC. NF-YB and NF-YC must interact and dimerize for NF-YA association and DNA binding.

Its subcellular location is the nucleus. In terms of biological role, component of the sequence-specific heterotrimeric transcription factor (NF-Y) which specifically recognizes a 5'-CCAAT-3' box motif found in the promoters of its target genes. NF-Y can function as both an activator and a repressor, depending on its interacting cofactors. This chain is Nuclear transcription factor Y subunit gamma (NFYC), found in Pongo abelii (Sumatran orangutan).